The following is a 2227-amino-acid chain: MNMSRQGIFQTVGSGLDHILSLADIEEEQMIQSVDRTAVTGASYFTSVDQSSVHTAEVGSHQVEPLRTSVDKPGSKKTQGEKFFLIHSADWLTTHALFHEVAKLDVVKLLYNEQFAVQGLLRYHTYARFGIEIQVQINPTPFQQGGLICAMVPGDQSYGSIASLTVYPHGLLNCNINNVVRIKVPFIYTRGAYHFKDPQYPVWELTIRVWSELNIGTGTSAYTSLNVLARFTDLELHGLTPLSTQMMRNEFRVSTTENVVNLSNYEDARAKMSFALDQEDWKSDPSQGGGIKITHFTTWTSIPTLAAQFPFNASDSVGQQIKVIPVDPYFFQMTNTNPDQKCITALASICQMFCFWRGDLVFDFQVFPTKYHSGRLLFCFVPGNELIDVSGITLKQATTAPCAVMDITGVQSTLRFRVPWISDTPYRVNRYTKSAHQKGEYTAIGKLIVYCYNRLTSPSNVASHVRVNVYLSAINLECFAPLYHAMDVTTQVGDDSGGFSTTVSTEQNVPDPQVGITTMKDLKGKANRGKMDVSGVQAPVGAITTIEDPVLAKKVPETFPELKPGESRHTSDHMSIYKFMGRSHFLCTFTFNSNNKEYTFPITLSSTSNPPHGLPSTLRWFFNLFQLYRGPLDLTIIIIGATDVDGMAWFTPVGLAVDTPWVEKESALSIDYKTALGAVRFNTRRTGNIQIRLPWYSYLYAVSGALDGLGDKTDSTFGLVSIQIANYNHSDEYLSFSCYLSVTEQSEFYFPRAPLNSNAMLSTESMMSRIAAGDLESSVDDPRSEEDKRFESHIECRKPYKELRLEVGKQRLKYAQEELSNEVLPPPRKKKGLFSQAKISLFYTEEHEIMKFSWRGVTADTRALRRFGFSLAAGRSVWTLEMDAGVLTGRLIRLNDEKWTEMKDDKIVSLIEKFTSNKYWSKVNFPHGMLDLEEIAANSKDFPNMSETDLCFLLHWLNPKKINLADRMLGLSGVQEIKEQGVGLIAECRTFLDSIAGTLKSMMFGFHHSVTVEIINTVLCFVKSGILLYVMQQLNQDEHSHIIGLLRVMNYVDIGCSVISCGKVFSKMLETVFNWQMDSRMMELRTQSFSNWLRDICSGITIFKNFKDAIYWLYTKLNDFYEVNYGKKKDILNILKDNQQKIEKAIEEADKFSILQIQDVEKFEQYQKGVDLIQKLRTVHSMAQVDPNLMVHLSPLRDCIARVHQKLKNLGSINQAMVTRCEPVVCYLYGKRGGGKSLTSIALATKICKHYGVEPEKNIYTKPVASDYWDGYSGQLVCIIDDIGQNTTDEDWSDFCQLVSGCPLRLNMASLEEKGRHFSSPFIIATSNWSNPSPKTVYVKEAIDRRLHFKVEVNPASFSKNPHNDMLNVNLAKTNDAIKDMSCVDLIMDGHNVSLMDLLSSLVMTVEIRKQNMTAFMELWSQGISDDDNDSAMAEFFQSFPSGEPSNSKLSGFFQSVTNHKWVAVGAAVGILGVLVGGWFVYKHFSRKEEEPIPAEGVYHGVTKPKQVIKLDADPVESQSTLEIAGLVRKNLVQFGVGEKNGCVRWVMNALGVKDDWLLVPSHAYKFEKDYEMMEFYFNRGGTYYSISAGNVVIQSLDVGFQDVVLMKVPTIPKFRDITQHFIKKGDVPRALNRLATLVTTVNGTPMLISEGPLKMEEKATYVHKKNDGTTVDLTVDQAWRGKGEGLPGMCGGALVSSNQSIQNAILGIHVAGGNSILVAKLVTQEMFQNIDKKIESQRIMKVEFTQCSMNVVSKTLFRKSPIHHHIDKTMINFPAAMPFSKAEIDPMAMMLSKYSLPIVEEPEDYKEASIFYQNKIVGKTQLVDDFLDLDMAITGAPGIDAINMDSSPGFPYVQERLTKRDLIWLDENGLLLGVHPRLAQRILFNTVMMENCSDLDVVFTTCPKDELRPLEKVLESKTRAIDACPLDYTILCRMYWGPAISYFHLNPGFHTGVAIGIDPDCQWDELFKTMIRFGDVGLDLDFSAFDASLSPFMIREAGRIMSELSGTPSHFGTALMNTIIYSKHLLYNCCYHVCGSMPSGSPCTALLNSIINNVNLYYVFSKIFGKSPVFFCQALKILCYGDDVLIVFSRDVQIDNLDLIGQKIVDEFKKLGMTATSADKNVPQLKPVSELTFLKRSFNLVEDRIRPAISEKTIWSLIAWQRSNAEFEQNLENAQWFAFMHGYEFYQKFYYFVQSCLEKEMIEYRLKSYDWWRMRFYDQCFICDLS.

2 consecutive short sequence motifs ((L)YPX(n)L motif) follow at residues 167 to 171 (YPHGL) and 200 to 205 (YPVWEL). The interval 766-836 (MMSRIAAGDL…PRKKKGLFSQ (71 aa)) is involved in P1-2A pentamerization. Residues 1010–1030 (VTVEIINTVLCFVKSGILLYV) form a helical membrane-spanning segment. The segment at 1043 to 1070 (IGLLRVMNYVDIGCSVISCGKVFSKMLE) is membrane-penetrating ability. A coiled-coil region spans residues 1127 to 1152 (KKKDILNILKDNQQKIEKAIEEADKF). Residues 1204–1366 (HQKLKNLGSI…SFSKNPHNDM (163 aa)) form the SF3 helicase domain. 1230-1237 (GKRGGGKS) is an ATP binding site. Residues 1462 to 1482 (WVAVGAAVGILGVLVGGWFVY) traverse the membrane as a helical segment. Tyr-1499 is subject to O-(5'-phospho-RNA)-tyrosine. Residues 1514–1728 (DPVESQSTLE…VAKLVTQEMF (215 aa)) enclose the Peptidase C3 domain. Catalysis depends on for protease 3C activity residues His-1563, Asp-1603, and Cys-1691. A RdRp catalytic domain is found at 1976–2097 (DVGLDLDFSA…VFSRDVQIDN (122 aa)).

Belongs to the picornaviridae polyprotein family. In terms of assembly, homodimer. Homomultimer; probably interacts with membranes in a multimeric form. Seems to assemble into amyloid-like fibers. As to quaternary structure, homodimer. Monomer. Interacts with protein 3CD. Interacts with host ACBD3. In terms of assembly, interacts with protein 3AB. As to quaternary structure, interacts with human MAVS. Homodimer; disulfide-linked. In terms of assembly, homopentamer. Homooligomer. As to quaternary structure, interacts with capsid protein VP2. Interacts with capsid protein VP3. Interacts with capsid protein VP1. Interacts with capsid protein VP3. In terms of assembly, interacts with capsid protein VP1. Interacts with capsid protein VP2. Specific enzymatic cleavages by viral protease in vivo yield a variety of precursors and mature proteins. Polyprotein processing intermediates are produced, such as P1-2A which is a functional precursor of the structural proteins, VP0 which is a VP4-VP2 precursor, VP1-2A precursor, 3ABC precursor which is a stable and catalytically active precursor of 3A, 3B and 3C proteins, 3AB and 3CD precursors. The assembly signal 2A is removed from VP1-2A by a host protease, possibly host Cathepsin L. This cleavage occurs over a region of 3 amino-acids probably generating VP1 proteins with heterogeneous C-termini. Post-translationally, during virion maturation, immature virions are rendered infectious following cleavage of VP0 into VP4 and VP2. This maturation seems to be an autocatalytic event triggered by the presence of RNA in the capsid and is followed by a conformational change of the particle. In terms of processing, the assembly signal 2A is removed from VP1-2A by a host protease, possibly host Cathepsin L in naked virions. This cleavage does not occur in enveloped virions. This cleavage occurs over a region of 3 amino-acids probably generating VP1 proteins with heterogeneous C-termini. VPg is uridylylated prior to priming replication into VPg-pUpU. Post-translationally, unlike other picornaviruses, does not seem to be myristoylated.

The protein localises to the virion. It localises to the host endosome. It is found in the host multivesicular body. The protein resides in the host membrane. Its subcellular location is the host mitochondrion outer membrane. The protein localises to the host cytoplasm. It localises to the host cytoplasmic vesicle membrane. The enzyme catalyses RNA(n) + a ribonucleoside 5'-triphosphate = RNA(n+1) + diphosphate. It catalyses the reaction a ribonucleoside 5'-triphosphate + H2O = a ribonucleoside 5'-diphosphate + phosphate + H(+). It carries out the reaction Selective cleavage of Gln-|-Gly bond in the poliovirus polyprotein. In other picornavirus reactions Glu may be substituted for Gln, and Ser or Thr for Gly.. In terms of biological role, capsid proteins VP1, VP2, and VP3 form a closed capsid enclosing the viral positive strand RNA genome. All these proteins contain a beta-sheet structure called beta-barrel jelly roll. Together they form an icosahedral capsid (T=3) composed of 60 copies of each VP1, VP2, and VP3, with a diameter of approximately 300 Angstroms. VP1 is situated at the 12 fivefold axes, whereas VP2 and VP3 are located at the quasi-sixfold axes. The naked capsid interacts with the host receptor HAVCR1 to provide virion attachment to and probably entry into the target cell. VP0 precursor is a component of the immature procapsids. Functionally, plays a role in the assembly of the 12 pentamers into an icosahedral structure. Has not been detected in mature virions, supposedly owing to its small size. Its function is as follows. Precursor component of immature procapsids that corresponds to an extended form of the structural protein VP1. After maturation, possibly by the host Cathepsin L, the assembly signal 2A is cleaved to give rise to the mature VP1 protein. In terms of biological role, functions as a viroporin. Affects membrane integrity and causes an increase in membrane permeability. Involved in host intracellular membrane rearrangements probably to give rise to the viral factories. Does not disrupt calcium homeostasis or glycoprotein trafficking. Antagonizes the innate immune response of the host by suppressing IFN-beta synthesis, which it achieves by interfering with the RIG-I/IFIH1 pathway. Affects membrane integrity and causes an increase in membrane permeability. Functionally, associates with and induces structural rearrangements of intracellular membranes. Displays RNA-binding activity. Its function is as follows. The precursor 3ABC is targeted to the mitochondrial membrane where protease 3C activity cleaves and inhibits the host antiviral protein MAVS, thereby disrupting activation of IRF3 through the IFIH1/MDA5 pathway. In vivo, the protease activity of 3ABC precursor is more efficient in cleaving the 2BC precursor than that of protein 3C. The 3ABC precursor may therefore play a role in the proteolytic processing of the polyprotein. Possible viroporin. In terms of biological role, interacts with the 3CD precursor and with RNA structures found at both the 5'- and 3'-termini of the viral genome. Since the 3AB precursor contains the hydrophobic domain 3A, it probably anchors the whole viral replicase complex to intracellular membranes on which viral RNA synthesis occurs. May serve as membrane anchor to the 3AB and 3ABC precursors via its hydrophobic domain. May interact with RNA. Functionally, acts as a primer for viral RNA replication and remains covalently bound to viral genomic RNA. VPg is uridylylated prior to priming replication into VPg-pUpU. The VPg-pUpU is then used as primer on the genomic RNA poly(A) by the RNA-dependent RNA polymerase to replicate the viral genome. Its function is as follows. Cysteine protease that generates mature viral proteins from the precursor polyprotein. In addition to its proteolytic activity, it binds to viral RNA, and thus influences viral genome replication. RNA and substrate bind cooperatively to the protease. Cleaves IKBKG/NEMO to impair innate immune signaling. Cleaves host PABPC1 which may participate in the switch of viral translation to RNA synthesis. In terms of biological role, interacts with the 3AB precursor and with RNA structures found at both the 5'- and 3'-termini of the viral genome. Disrupts TLR3 signaling by degrading the host adapter protein TICAM1/TRIF. Replicates genomic and antigenomic RNA by recognizing replications specific signals. The protein is Genome polyprotein of Cercopithecus hamlyni (Owl-faced monkey).